A 314-amino-acid polypeptide reads, in one-letter code: Methionyl-tRNA formyltransferase (314 aa).

109–112 is a binding site for (6S)-5,6,7,8-tetrahydrofolate; it reads SLLP.

It belongs to the Fmt family.

The catalysed reaction is L-methionyl-tRNA(fMet) + (6R)-10-formyltetrahydrofolate = N-formyl-L-methionyl-tRNA(fMet) + (6S)-5,6,7,8-tetrahydrofolate + H(+). Functionally, attaches a formyl group to the free amino group of methionyl-tRNA(fMet). The formyl group appears to play a dual role in the initiator identity of N-formylmethionyl-tRNA by promoting its recognition by IF2 and preventing the misappropriation of this tRNA by the elongation apparatus. The chain is Methionyl-tRNA formyltransferase from Alkaliphilus metalliredigens (strain QYMF).